Here is a 329-residue protein sequence, read N- to C-terminus: 4-hydroxythreonine-4-phosphate dehydrogenase (329 aa).

The substrate site is built by H136 and T137. A divalent metal cation-binding residues include H166, H211, and H266. Substrate is bound by residues K274, N283, and R292.

It belongs to the PdxA family. In terms of assembly, homodimer. Zn(2+) is required as a cofactor. The cofactor is Mg(2+). Requires Co(2+) as cofactor.

The protein resides in the cytoplasm. It catalyses the reaction 4-(phosphooxy)-L-threonine + NAD(+) = 3-amino-2-oxopropyl phosphate + CO2 + NADH. The protein operates within cofactor biosynthesis; pyridoxine 5'-phosphate biosynthesis; pyridoxine 5'-phosphate from D-erythrose 4-phosphate: step 4/5. Its function is as follows. Catalyzes the NAD(P)-dependent oxidation of 4-(phosphooxy)-L-threonine (HTP) into 2-amino-3-oxo-4-(phosphooxy)butyric acid which spontaneously decarboxylates to form 3-amino-2-oxopropyl phosphate (AHAP). The sequence is that of 4-hydroxythreonine-4-phosphate dehydrogenase from Shigella boydii serotype 4 (strain Sb227).